The following is a 231-amino-acid chain: Ribose-5-phosphate isomerase A (231 aa).

Residues 40–43 (TGST), 93–96 (DGAD), and 106–109 (KGGG) contribute to the substrate site. The active-site Proton acceptor is the E115. Substrate is bound at residue K133.

Belongs to the ribose 5-phosphate isomerase family. Homodimer.

It carries out the reaction aldehydo-D-ribose 5-phosphate = D-ribulose 5-phosphate. It participates in carbohydrate degradation; pentose phosphate pathway; D-ribose 5-phosphate from D-ribulose 5-phosphate (non-oxidative stage): step 1/1. Functionally, catalyzes the reversible conversion of ribose-5-phosphate to ribulose 5-phosphate. The chain is Ribose-5-phosphate isomerase A from Escherichia coli O1:K1 / APEC.